Here is a 140-residue protein sequence, read N- to C-terminus: Large-conductance mechanosensitive channel 3 (140 aa).

The next 3 membrane-spanning stretches (helical) occupy residues Phe-8–Gly-28, Ile-30–Leu-50, and Gly-81–Val-101.

It belongs to the MscL family. As to quaternary structure, homopentamer.

The protein localises to the cell inner membrane. In terms of biological role, channel that opens in response to stretch forces in the membrane lipid bilayer. May participate in the regulation of osmotic pressure changes within the cell. The polypeptide is Large-conductance mechanosensitive channel 3 (Mesorhizobium japonicum (strain LMG 29417 / CECT 9101 / MAFF 303099) (Mesorhizobium loti (strain MAFF 303099))).